Here is a 197-residue protein sequence, read N- to C-terminus: Thymidylate kinase (197 aa).

7-14 (GIDGSGKS) provides a ligand contact to ATP.

This sequence belongs to the thymidylate kinase family.

The enzyme catalyses dTMP + ATP = dTDP + ADP. Phosphorylation of dTMP to form dTDP in both de novo and salvage pathways of dTTP synthesis. This Thermotoga sp. (strain RQ2) protein is Thymidylate kinase.